Reading from the N-terminus, the 319-residue chain is MKKIAVLTSGGDAPGMNAALRAVTRMALHHGLEVMGVQRGYAGLINGELFKMDRKSVSEIINRGGTILRTARCLEFKQEEVREKAAQILKAYGVEALVVIGGDGSFMGAKLLSKLGVKTVGLPGTIDNDLSYTDYTIGFDTALNTVVDAINKLRDTSTSHERVSIVEVMGRNCGDLALYAGIAGGAEAIIVPEMPFDKDELIKTILEGRTNGKTHSIIVVAEGVGGSAELAKEIESVTGIETRATILGHIQRGGSPTADDIVLASRMGAKAVEVLLEGKTSKVIGIKENRIFDMDIDEALDIERSFDESLYEMANAINK.

Position 11 (glycine 11) interacts with ATP. 21 to 25 is an ADP binding site; that stretch reads RAVTR. Residues 72 to 73 and 102 to 105 contribute to the ATP site; these read RC and GDGS. Residue aspartate 103 participates in Mg(2+) binding. Position 125 to 127 (125 to 127) interacts with substrate; the sequence is TID. The Proton acceptor role is filled by aspartate 127. ADP is bound at residue arginine 154. Substrate-binding positions include arginine 162 and 169–171; that span reads MGR. Residues 185 to 187 and 213 to 215 each bind ADP; these read GAE and KTH. Substrate contacts are provided by residues glutamate 222, arginine 243, and 249–252; that span reads HIQR.

Belongs to the phosphofructokinase type A (PFKA) family. ATP-dependent PFK group I subfamily. Prokaryotic clade 'B1' sub-subfamily. Homotetramer. Mg(2+) serves as cofactor.

Its subcellular location is the cytoplasm. It catalyses the reaction beta-D-fructose 6-phosphate + ATP = beta-D-fructose 1,6-bisphosphate + ADP + H(+). It functions in the pathway carbohydrate degradation; glycolysis; D-glyceraldehyde 3-phosphate and glycerone phosphate from D-glucose: step 3/4. Allosterically activated by ADP and other diphosphonucleosides, and allosterically inhibited by phosphoenolpyruvate. Its function is as follows. Catalyzes the phosphorylation of D-fructose 6-phosphate to fructose 1,6-bisphosphate by ATP, the first committing step of glycolysis. The polypeptide is ATP-dependent 6-phosphofructokinase 1 (Clostridium perfringens (strain 13 / Type A)).